A 206-amino-acid polypeptide reads, in one-letter code: Pyrrolidone-carboxylate peptidase 2 (206 aa).

Active-site residues include E78, C141, and H165.

Belongs to the peptidase C15 family. As to quaternary structure, homotetramer.

The protein localises to the cytoplasm. It carries out the reaction Release of an N-terminal pyroglutamyl group from a polypeptide, the second amino acid generally not being Pro.. Removes 5-oxoproline from various penultimate amino acid residues except L-proline. The sequence is that of Pyrrolidone-carboxylate peptidase 2 from Caldanaerobacter subterraneus subsp. tengcongensis (strain DSM 15242 / JCM 11007 / NBRC 100824 / MB4) (Thermoanaerobacter tengcongensis).